Here is a 1457-residue protein sequence, read N- to C-terminus: Receptor-type tyrosine-protein phosphatase kappa (1457 aa).

The signal sequence occupies residues 1 to 25 (MDVAAAALPAFVALWLLYPWPLLGS). Residues 26–752 (ALGQFSAGGC…PAKQTDRVVK (727 aa)) are Extracellular-facing. The region spanning 30-193 (FSAGGCTFDD…IQVLSYPCDK (164 aa)) is the MAM domain. 3 N-linked (GlcNAc...) asparagine glycosylation sites follow: Asn-100, Asn-139, and Asn-210. In terms of domain architecture, Ig-like C2-type spans 195–280 (PHFLRLGDVE…TQSERGSGVS (86 aa)). Cys-215 and Cys-269 are disulfide-bonded. Fibronectin type-III domains are found at residues 293–388 (PIAP…CAEP), 391–487 (TPKT…TDED), 490–594 (GPVP…SAPS), and 595–688 (LPDY…TVGD). Asn-415, Asn-423, Asn-435, Asn-461, Asn-551, Asn-585, Asn-589, Asn-606, and Asn-689 each carry an N-linked (GlcNAc...) asparagine glycan. Residues 753–774 (IAGISAGILVFILLLLVVIVIV) form a helical membrane-spanning segment. The Cytoplasmic portion of the chain corresponds to 775–1457 (KKSKLAKKRK…DVALEYLESS (683 aa)). Residue Ser-868 is modified to Phosphoserine. Tyrosine-protein phosphatase domains follow at residues 899-1159 (FKEE…ILEA) and 1191-1453 (LKDE…ALEY). Substrate contacts are provided by residues Asp-1068, 1100 to 1106 (CSAGAGR), and Gln-1144. The active-site Phosphocysteine intermediate is the Cys-1100. Cys-1394 serves as the catalytic Phosphocysteine intermediate.

Belongs to the protein-tyrosine phosphatase family. Receptor class 2B subfamily. This protein undergoes proteolytic processing. As to expression, high levels in liver and kidney. Lower levels in lung, brain and heart. Not seen in spleen and testis.

The protein localises to the membrane. It catalyses the reaction O-phospho-L-tyrosyl-[protein] + H2O = L-tyrosyl-[protein] + phosphate. Regulation of processes involving cell contact and adhesion such as growth control, tumor invasion, and metastasis. Negative regulator of EGFR signaling pathway. Forms complexes with beta-catenin and gamma-catenin/plakoglobin. Beta-catenin may be a substrate for the catalytic activity of PTPRK/PTP-kappa. This is Receptor-type tyrosine-protein phosphatase kappa (Ptprk) from Mus musculus (Mouse).